A 213-amino-acid chain; its full sequence is Transcription antitermination protein NusB (213 aa).

Belongs to the NusB family.

In terms of biological role, involved in transcription antitermination. Required for transcription of ribosomal RNA (rRNA) genes. Binds specifically to the boxA antiterminator sequence of the ribosomal RNA (rrn) operons. This chain is Transcription antitermination protein NusB, found in Synechococcus elongatus (strain ATCC 33912 / PCC 7942 / FACHB-805) (Anacystis nidulans R2).